A 457-amino-acid chain; its full sequence is MKLGISGGAGEAMEGELSFVSPARSSCFSFEGGGSGSPTWVSTVEALLRSPTSSVSDGGGGGGGGYNSPARASSPLQKQIPYCRDAGDFSSLTWASTLEKPLESPSSCISDGRGGGFGSPTSAFPPEKLLISPPTCVSDNRGVGNVGGFPSLPWASSLERLLTSPSSCVSDSRGVGNADGFPSLPWASSLEKPLTSPSSCVSDGRSGGYSSPLGASAEREREVREAEMLLRAIAERYDDCFLRLRDAAAELSDLHRERLRLAAENLHLSLLLEELESEQRKQASAMAPPKLEEDEAAQGGAPKSISIRSPGYLSQKPPQGQARPQRLRVRASQAMEISHPNCLIFVMGNQCSPKEAAAAGDEEDEEDKGGGEVEVEAYRQGAAKTELCNKWERGACPYGARCRFAHGLQELRPVIRHPRYKTLPCQMFAAASGCPYGHRCHFRHSPLRAAAAESFCY.

Disordered stretches follow at residues proline 51–serine 73, leucine 102–leucine 130, threonine 195–arginine 221, and arginine 280–valine 329. Positions aspartate 57–tyrosine 66 are enriched in gly residues. The stretch at alanine 215–glutamate 276 forms a coiled coil. 2 consecutive C3H1-type zinc fingers follow at residues alanine 382–glutamine 409 and arginine 419–leucine 447.

The polypeptide is Putative zinc finger CCCH domain-containing protein 21 (Oryza sativa subsp. japonica (Rice)).